A 122-amino-acid chain; its full sequence is Large ribosomal subunit protein bL20 (122 aa).

The protein belongs to the bacterial ribosomal protein bL20 family.

Binds directly to 23S ribosomal RNA and is necessary for the in vitro assembly process of the 50S ribosomal subunit. It is not involved in the protein synthesizing functions of that subunit. The chain is Large ribosomal subunit protein bL20 from Saccharopolyspora erythraea (strain ATCC 11635 / DSM 40517 / JCM 4748 / NBRC 13426 / NCIMB 8594 / NRRL 2338).